The primary structure comprises 287 residues: Cysteine-rich repeat secretory protein 59 (287 aa).

Residues 1-26 (METTKKLSPIFCFSSLLCLFFTMNQA) form the signal peptide. Gnk2-homologous domains are found at residues 32–134 (HMDT…DKFF) and 140–250 (KKPN…ITTS). N-linked (GlcNAc...) asparagine glycosylation is found at Asn43, Asn47, Asn63, Asn72, Asn93, Asn103, Asn111, and Asn212.

This sequence belongs to the cysteine-rich repeat secretory protein family.

It localises to the secreted. In Arabidopsis thaliana (Mouse-ear cress), this protein is Cysteine-rich repeat secretory protein 59 (CRRSP59).